Reading from the N-terminus, the 142-residue chain is MHEVRVLAFQKIYSIDINQSAMDDIFDIFSIEDKGLDIENESIKSFYSSLVNGTFNNLEYIDSLIKDISWNWSLDRMDKVDLAILRMGVYSLKFQNFENSKRALIDEAILIAKKYGSKNSDKFINGILDALLKNMENCIEKK.

The protein belongs to the NusB family.

In terms of biological role, involved in transcription antitermination. Required for transcription of ribosomal RNA (rRNA) genes. Binds specifically to the boxA antiterminator sequence of the ribosomal RNA (rrn) operons. This Borrelia garinii subsp. bavariensis (strain ATCC BAA-2496 / DSM 23469 / PBi) (Borreliella bavariensis) protein is Transcription antitermination protein NusB.